The primary structure comprises 223 residues: Phosphoribosylformylglycinamidine synthase subunit PurQ (223 aa).

The 221-residue stretch at 3–223 (FAVLVFPGSN…MVKSWREQHV (221 aa)) folds into the Glutamine amidotransferase type-1 domain. C85 (nucleophile) is an active-site residue. Catalysis depends on residues H193 and E195.

Part of the FGAM synthase complex composed of 1 PurL, 1 PurQ and 2 PurS subunits.

It is found in the cytoplasm. The enzyme catalyses N(2)-formyl-N(1)-(5-phospho-beta-D-ribosyl)glycinamide + L-glutamine + ATP + H2O = 2-formamido-N(1)-(5-O-phospho-beta-D-ribosyl)acetamidine + L-glutamate + ADP + phosphate + H(+). It carries out the reaction L-glutamine + H2O = L-glutamate + NH4(+). The protein operates within purine metabolism; IMP biosynthesis via de novo pathway; 5-amino-1-(5-phospho-D-ribosyl)imidazole from N(2)-formyl-N(1)-(5-phospho-D-ribosyl)glycinamide: step 1/2. Part of the phosphoribosylformylglycinamidine synthase complex involved in the purines biosynthetic pathway. Catalyzes the ATP-dependent conversion of formylglycinamide ribonucleotide (FGAR) and glutamine to yield formylglycinamidine ribonucleotide (FGAM) and glutamate. The FGAM synthase complex is composed of three subunits. PurQ produces an ammonia molecule by converting glutamine to glutamate. PurL transfers the ammonia molecule to FGAR to form FGAM in an ATP-dependent manner. PurS interacts with PurQ and PurL and is thought to assist in the transfer of the ammonia molecule from PurQ to PurL. This chain is Phosphoribosylformylglycinamidine synthase subunit PurQ, found in Staphylococcus aureus (strain MSSA476).